Here is a 553-residue protein sequence, read N- to C-terminus: Glycerol kinase 3 (553 aa).

Thr-20 is a substrate binding site. Arg-24 lines the ATP pocket. Positions 94, 148, and 259 each coordinate substrate. Residues Thr-281, Gly-326, and 427-431 (GMTSN) each bind ATP.

Belongs to the FGGY kinase family.

The protein resides in the mitochondrion outer membrane. It is found in the cytoplasm. The catalysed reaction is glycerol + ATP = sn-glycerol 3-phosphate + ADP + H(+). It functions in the pathway polyol metabolism; glycerol degradation via glycerol kinase pathway; sn-glycerol 3-phosphate from glycerol: step 1/1. Functionally, may be involved in the regulation of glycerol uptake and metabolism. This Homo sapiens (Human) protein is Glycerol kinase 3.